A 419-amino-acid polypeptide reads, in one-letter code: Methylthioribose kinase (419 aa).

Asn49 and Lys64 together coordinate ATP. Asp239 lines the substrate pocket. 256-258 is a binding site for ATP; the sequence is DPE. Position 365 (Arg365) interacts with substrate.

The protein belongs to the methylthioribose kinase family. In terms of assembly, homodimer.

It catalyses the reaction 5-(methylsulfanyl)-D-ribose + ATP = 5-(methylsulfanyl)-alpha-D-ribose 1-phosphate + ADP + H(+). The catalysed reaction is 5-deoxy-D-ribose + ATP = 5-deoxy-alpha-D-ribose 1-phosphate + ADP + H(+). Its pathway is amino-acid biosynthesis; L-methionine biosynthesis via salvage pathway; S-methyl-5-thio-alpha-D-ribose 1-phosphate from S-methyl-5'-thioadenosine (hydrolase route): step 2/2. Catalyzes the phosphorylation of methylthioribose into methylthioribose-1-phosphate. Also catalyzes the phosphorylation of 5-deoxyribose to 5-deoxyribose-1-phosphate. Part of a bifunctional DHAP-shunt salvage pathway for SAM by-products. The chain is Methylthioribose kinase from Escherichia coli O45:K1 (strain S88 / ExPEC).